The sequence spans 325 residues: uncharacterized protein (325 aa).

Composition is skewed to polar residues over residues 1 to 21 (MSYQQRANDSMNSAKQYSSSA) and 29 to 57 (EPFSSSGAPQNRNFDTSYTSEIPSNSSRA). The segment at 1 to 325 (MSYQQRANDS…LKTGHHSERY (325 aa)) is disordered. Residues 86 to 109 (ESRKKEQSDVRGGDTSYSRRHDDS) are compositionally biased toward basic and acidic residues. Composition is skewed to polar residues over residues 114–167 (NKYS…TTQG) and 174–193 (YSQSYPTDTYGSRQKATPSD). 2 stretches are compositionally biased toward low complexity: residues 200–210 (YDYSSSGSHTH) and 252–278 (ATDTTAEANRRAATGTRNARTTAQRNA). Residues 282–325 (EDEHVSMGDKMKGNMEKMAGKLTRDPELVQKGEDLKTGHHSERY) are compositionally biased toward basic and acidic residues.

This is an uncharacterized protein from Schizosaccharomyces pombe (strain 972 / ATCC 24843) (Fission yeast).